A 394-amino-acid polypeptide reads, in one-letter code: 1-deoxy-D-xylulose 5-phosphate reductoisomerase (394 aa).

Positions 12, 13, 14, 15, 39, 40, and 126 each coordinate NADPH. Position 127 (K127) interacts with 1-deoxy-D-xylulose 5-phosphate. Residue E128 coordinates NADPH. Residue D152 coordinates Mn(2+). Positions 153, 154, 183, and 206 each coordinate 1-deoxy-D-xylulose 5-phosphate. E154 serves as a coordination point for Mn(2+). G212 contacts NADPH. Positions 219, 224, 225, and 228 each coordinate 1-deoxy-D-xylulose 5-phosphate. E228 contacts Mn(2+).

Belongs to the DXR family. It depends on Mg(2+) as a cofactor. Mn(2+) is required as a cofactor.

It catalyses the reaction 2-C-methyl-D-erythritol 4-phosphate + NADP(+) = 1-deoxy-D-xylulose 5-phosphate + NADPH + H(+). The protein operates within isoprenoid biosynthesis; isopentenyl diphosphate biosynthesis via DXP pathway; isopentenyl diphosphate from 1-deoxy-D-xylulose 5-phosphate: step 1/6. Its function is as follows. Catalyzes the NADPH-dependent rearrangement and reduction of 1-deoxy-D-xylulose-5-phosphate (DXP) to 2-C-methyl-D-erythritol 4-phosphate (MEP). This chain is 1-deoxy-D-xylulose 5-phosphate reductoisomerase, found in Neisseria meningitidis serogroup B (strain ATCC BAA-335 / MC58).